The primary structure comprises 190 residues: Surfactant protein C (190 aa).

A propeptide spanning residues 1-23 (MDVGSKEVLIENPPDYSAAPQGR) is cleaved from the precursor. The S-palmitoyl cysteine moiety is linked to residue Cys-28. The propeptide occupies 59-190 (HMSQKHTEMV…LCGEVPLYYI (132 aa)). One can recognise a BRICHOS domain in the interval 94 to 190 (FSIGSTGIVV…LCGEVPLYYI (97 aa)). A disulfide bridge links Cys-121 with Cys-182.

The protein localises to the secreted. Its subcellular location is the extracellular space. It is found in the surface film. Pulmonary surfactant associated proteins promote alveolar stability by lowering the surface tension at the air-liquid interface in the peripheral air spaces. The sequence is that of Surfactant protein C (SFTPC) from Neovison vison (American mink).